Consider the following 182-residue polypeptide: Peptidyl-tRNA hydrolase (182 aa).

Residue Y14 coordinates tRNA. H19 functions as the Proton acceptor in the catalytic mechanism. TRNA contacts are provided by F60, N62, and N106.

Belongs to the PTH family. In terms of assembly, monomer.

The protein localises to the cytoplasm. It catalyses the reaction an N-acyl-L-alpha-aminoacyl-tRNA + H2O = an N-acyl-L-amino acid + a tRNA + H(+). Functionally, hydrolyzes ribosome-free peptidyl-tRNAs (with 1 or more amino acids incorporated), which drop off the ribosome during protein synthesis, or as a result of ribosome stalling. Its function is as follows. Catalyzes the release of premature peptidyl moieties from peptidyl-tRNA molecules trapped in stalled 50S ribosomal subunits, and thus maintains levels of free tRNAs and 50S ribosomes. In Campylobacter concisus (strain 13826), this protein is Peptidyl-tRNA hydrolase.